The chain runs to 492 residues: Nuclear hormone receptor family member nhr-4 (492 aa).

Positions 47-122 (RLICDVCGDV…VGMNPDSVQN (76 aa)) form a DNA-binding region, nuclear receptor. 2 consecutive NR C4-type zinc fingers follow at residues 50–70 (CDVC…CNGC) and 86–110 (CRFG…LKKC). A disordered region spans residues 121–143 (QNERDRNAKNGGMGGPMSSPTQS). The region spanning 215–481 (MDFSIHSAVL…ELIQATHKTT (267 aa)) is the NR LBD domain.

It belongs to the nuclear hormone receptor family.

The protein localises to the nucleus. In terms of biological role, orphan nuclear receptor. The chain is Nuclear hormone receptor family member nhr-4 (nhr-4) from Caenorhabditis elegans.